The following is a 389-amino-acid chain: Chalcone synthase H2 (389 aa).

Cys-164 is a catalytic residue.

It belongs to the thiolase-like superfamily. Chalcone/stilbene synthases family.

It is found in the cytoplasm. The catalysed reaction is (E)-4-coumaroyl-CoA + 3 malonyl-CoA + 3 H(+) = 2',4,4',6'-tetrahydroxychalcone + 3 CO2 + 4 CoA. The protein operates within secondary metabolite biosynthesis; flavonoid biosynthesis. Its function is as follows. Involved in the biosynthesis of prenylated phenolics natural products which contribute to the bitter taste of beer and display broad biological activities. Chalcone synthase that can use 4-coumaroyl-CoA to produce 4,2',4',6'-tetrahydroxychalcone (also termed naringenin-chalcone or chalcone) which can, under specific conditions, spontaneously isomerize into naringenin. The polypeptide is Chalcone synthase H2 (Humulus lupulus (European hop)).